The primary structure comprises 490 residues: Betaine aldehyde dehydrogenase (490 aa).

Asparagine 93 provides a ligand contact to K(+). 150–152 (GAW) is an NAD(+) binding site. Lysine 162 serves as the catalytic Charge relay system. 176-179 (KPSE) serves as a coordination point for NAD(+). Valine 180 serves as a coordination point for K(+). NAD(+) is bound at residue 230 to 233 (GTAT). Leucine 246 contributes to the K(+) binding site. The Proton acceptor role is filled by glutamate 252. NAD(+) is bound by residues glycine 254, cysteine 286, and glutamate 387. Cysteine 286 (nucleophile) is an active-site residue. Cysteine 286 is subject to Cysteine sulfenic acid (-SOH). Lysine 457 and glycine 460 together coordinate K(+). Residue glutamate 464 is the Charge relay system of the active site.

The protein belongs to the aldehyde dehydrogenase family. Dimer of dimers. K(+) is required as a cofactor.

It carries out the reaction betaine aldehyde + NAD(+) + H2O = glycine betaine + NADH + 2 H(+). It participates in amine and polyamine biosynthesis; betaine biosynthesis via choline pathway; betaine from betaine aldehyde: step 1/1. In terms of biological role, involved in the biosynthesis of the osmoprotectant glycine betaine. Catalyzes the irreversible oxidation of betaine aldehyde to the corresponding acid. This chain is Betaine aldehyde dehydrogenase, found in Xanthomonas campestris pv. campestris (strain ATCC 33913 / DSM 3586 / NCPPB 528 / LMG 568 / P 25).